A 450-amino-acid polypeptide reads, in one-letter code: Probable glucan endo-1,3-beta-glucosidase eglC (450 aa).

Positions 1-18 are cleaved as a signal peptide; sequence MQFTHLVALALALATSEA. Glu128 serves as the catalytic Proton donor. Asn183 carries an N-linked (GlcNAc...) asparagine glycan. Glu239 (nucleophile) is an active-site residue. N-linked (GlcNAc...) asparagine glycosylation is found at Asn362 and Asn368. 2 stretches are compositionally biased toward low complexity: residues 377–395 and 405–420; these read SSAI…SGSS and ASGQ…SAPS. The segment at 377-420 is disordered; sequence SSAISGSSSGSAAGSSGSSGSSGSGASGASGQSSSSTGSSSAPS. The GPI-anchor amidated asparagine moiety is linked to residue Asn427. The propeptide at 428–450 is removed in mature form; it reads AASGLSGSICGAVVAVCLALAAL.

Belongs to the glycosyl hydrolase 17 family. In terms of processing, the GPI-anchor is attached to the protein in the endoplasmic reticulum and serves to target the protein to the cell surface. There, the glucosamine-inositol phospholipid moiety is cleaved off and the GPI-modified mannoprotein is covalently attached via its lipidless GPI glycan remnant to the 1,6-beta-glucan of the outer cell wall layer.

The protein resides in the cell membrane. The protein localises to the secreted. Its subcellular location is the cell wall. It catalyses the reaction Hydrolysis of (1-&gt;3)-beta-D-glucosidic linkages in (1-&gt;3)-beta-D-glucans.. Glucanases play a role in cell expansion during growth, in cell-cell fusion during mating, and in spore release during sporulation. This enzyme may be involved in beta-glucan degradation and also function biosynthetically as a transglycosylase. The polypeptide is Probable glucan endo-1,3-beta-glucosidase eglC (eglC) (Aspergillus fumigatus (strain CBS 144.89 / FGSC A1163 / CEA10) (Neosartorya fumigata)).